The sequence spans 343 residues: Small ribosomal subunit biogenesis GTPase RsgA (343 aa).

The CP-type G domain occupies 116-275; it reads RGQLKPVAAN…LIDSPGIREF (160 aa). GTP is bound by residues 163–166 and 217–225; these read NKAD and GQSGVGKSS. Residues Cys299, Cys304, His306, and Cys312 each contribute to the Zn(2+) site.

It belongs to the TRAFAC class YlqF/YawG GTPase family. RsgA subfamily. In terms of assembly, monomer. Associates with 30S ribosomal subunit, binds 16S rRNA. Zn(2+) is required as a cofactor.

It is found in the cytoplasm. In terms of biological role, one of several proteins that assist in the late maturation steps of the functional core of the 30S ribosomal subunit. Helps release RbfA from mature subunits. May play a role in the assembly of ribosomal proteins into the subunit. Circularly permuted GTPase that catalyzes slow GTP hydrolysis, GTPase activity is stimulated by the 30S ribosomal subunit. The sequence is that of Small ribosomal subunit biogenesis GTPase RsgA from Azotobacter vinelandii (strain DJ / ATCC BAA-1303).